Here is a 527-residue protein sequence, read N- to C-terminus: Estrogen receptor beta (527 aa).

Residues 1-145 (MDVKNSPSSL…SPSSKRDAHF (145 aa)) form a modulating region. A phosphoserine; by MAPK mark is found at Ser-84 and Ser-102. 2 NR C4-type zinc fingers span residues 146–166 (CAVC…CEGC) and 182–206 (CPAT…LRKC). The segment at residues 146–211 (CAVCSDYASG…RLRKCYEVGM (66 aa)) is a DNA-binding region (nuclear receptor). Positions 261 to 495 (SPEQLVLTLL…DLLLEMLNAH (235 aa)) constitute an NR LBD domain.

This sequence belongs to the nuclear hormone receptor family. NR3 subfamily. As to quaternary structure, binds DNA as a homodimer. Can form a heterodimer with ESR1. Interacts with NCOA1, NCOA3, NCOA5 and NCOA6 coactivators, leading to a strong increase of transcription of target genes. Interacts with UBE1C and AKAP13. Interacts with DNTTIP2. Interacts with CCDC62 in the presence of estradiol/E2; this interaction seems to enhance the transcription of target genes. Interacts with DNAAF4. Interacts with PRMT2. Interacts with CCAR2 (via N-terminus) in a ligand-independent manner. Interacts with RBM39, in the presence of estradiol (E2). Interacts with STUB1/CHIP. Phosphorylation at Ser-84 and Ser-102 recruits NCOA1. Present in granulosa cells of antral follicles in various stages of follicular growth.

It is found in the nucleus. Functionally, nuclear hormone receptor. Binds estrogens with an affinity similar to that of ESR1ESR1/ER-alpha, and activates expression of reporter genes containing estrogen response elements (ERE) in an estrogen-dependent manner. The polypeptide is Estrogen receptor beta (ESR2) (Bos taurus (Bovine)).